We begin with the raw amino-acid sequence, 968 residues long: Serine/threonine-protein kinase apg-1 (968 aa).

The region spanning 24-329 is the Protein kinase domain; that stretch reads FVIDQEIGKG…FEDLFNHPVV (306 aa). Residues 30–38 and Lys53 contribute to the ATP site; that span reads IGKGSFAKV. Asp167 serves as the catalytic Proton acceptor. Disordered stretches follow at residues 334-500, 528-585, 884-906, and 939-968; these read PGLV…ERAA, MYPQ…LGTS, LPKR…LSDE, and ASKA…SVPA. Basic and acidic residues-rich tracts occupy residues 350–361, 371–380, and 417–431; these read LKEERPVSRAED, LRKDLADREG, and PRED…KEAA. Polar residues-rich tracts occupy residues 441–452, 528–538, and 545–557; these read VQPSTSAPTRPS, MYPQQPQSPKS, and ATQQ…TSGA.

It belongs to the protein kinase superfamily. Ser/Thr protein kinase family. APG1/unc-51/ULK1 subfamily. Homodimer. Forms a ternary complex with ATG13 and ATG17.

The protein localises to the cytoplasm. It localises to the preautophagosomal structure membrane. It catalyses the reaction L-seryl-[protein] + ATP = O-phospho-L-seryl-[protein] + ADP + H(+). The enzyme catalyses L-threonyl-[protein] + ATP = O-phospho-L-threonyl-[protein] + ADP + H(+). Serine/threonine protein kinase involved in the cytoplasm to vacuole transport (Cvt) and found to be essential in autophagy, where it is required for the formation of autophagosomes. Involved in the clearance of protein aggregates which cannot be efficiently cleared by the proteasome. Required for selective autophagic degradation of the nucleus (nucleophagy) as well as for mitophagy which contributes to regulate mitochondrial quantity and quality by eliminating the mitochondria to a basal level to fulfill cellular energy requirements and preventing excess ROS production. Also involved in endoplasmic reticulum-specific autophagic process, in selective removal of ER-associated degradation (ERAD) substrates. Plays a key role in ATG9 and ATG23 cycling through the pre-autophagosomal structure and is necessary to promote ATG18 binding to ATG9 through phosphorylation of ATG9. Catalyzes phosphorylation of ATG4, decreasing the interaction between ATG4 and ATG8 and impairing deconjugation of PE-conjugated forms of ATG8. The polypeptide is Serine/threonine-protein kinase apg-1 (Neurospora crassa (strain ATCC 24698 / 74-OR23-1A / CBS 708.71 / DSM 1257 / FGSC 987)).